The following is a 343-amino-acid chain: Dihydroorotase (343 aa).

Residues H14 and H16 each coordinate Zn(2+). Substrate-binding positions include 16–18 and N42; that span reads HLR. Zn(2+)-binding residues include K97, H136, H170, and D242. An N6-carboxylysine modification is found at K97. H136 is a substrate binding site. D242 is an active-site residue. Substrate is bound by residues H246 and A258.

Belongs to the metallo-dependent hydrolases superfamily. DHOase family. Class II DHOase subfamily. Homodimer. Zn(2+) is required as a cofactor.

It carries out the reaction (S)-dihydroorotate + H2O = N-carbamoyl-L-aspartate + H(+). It participates in pyrimidine metabolism; UMP biosynthesis via de novo pathway; (S)-dihydroorotate from bicarbonate: step 3/3. In terms of biological role, catalyzes the reversible cyclization of carbamoyl aspartate to dihydroorotate. The chain is Dihydroorotase from Helicobacter hepaticus (strain ATCC 51449 / 3B1).